The sequence spans 101 residues: NAD(P)H-quinone oxidoreductase subunit 4L, chloroplastic (101 aa).

Transmembrane regions (helical) follow at residues 2–22 (IFEH…YGLI), 32–52 (MCLE…SDFF), and 61–81 (IFSI…PAIV).

The protein belongs to the complex I subunit 4L family. NDH is composed of at least 16 different subunits, 5 of which are encoded in the nucleus.

It is found in the plastid. The protein resides in the chloroplast thylakoid membrane. It carries out the reaction a plastoquinone + NADH + (n+1) H(+)(in) = a plastoquinol + NAD(+) + n H(+)(out). It catalyses the reaction a plastoquinone + NADPH + (n+1) H(+)(in) = a plastoquinol + NADP(+) + n H(+)(out). In terms of biological role, NDH shuttles electrons from NAD(P)H:plastoquinone, via FMN and iron-sulfur (Fe-S) centers, to quinones in the photosynthetic chain and possibly in a chloroplast respiratory chain. The immediate electron acceptor for the enzyme in this species is believed to be plastoquinone. Couples the redox reaction to proton translocation, and thus conserves the redox energy in a proton gradient. The polypeptide is NAD(P)H-quinone oxidoreductase subunit 4L, chloroplastic (Phaseolus vulgaris (Kidney bean)).